Consider the following 1680-residue polypeptide: SWI/SNF chromatin-remodeling complex subunit snf22 (1680 aa).

4 disordered regions span residues 61–135, 203–258, 274–300, and 367–427; these read QQMR…SQAS, NNSF…HSFS, RRGSIPVNPSTFSASSPPSGSMLASPY, and YVYR…VPPT. The segment covering 62 to 91 has biased composition (polar residues); it reads QMRNQSSEFPDAENTNLRKQQDTLPTTGFN. 2 stretches are compositionally biased toward low complexity: residues 118–127 and 222–233; these read GNGNVGLNNP and SSLPHSFASPSS. The segment covering 234–245 has biased composition (polar residues); sequence TFEQPHTVQSRA. Composition is skewed to low complexity over residues 247–258, 282–299, and 374–392; these read SVDTTSSSHSFS, PSTFSASSPPSGSMLASP, and PPSATSFQPSSSRSPSVDP. Positions 406–419 are enriched in polar residues; that stretch reads PSPSASALKTQSHV. In terms of domain architecture, QLQ spans 429–465; it reads KLNHAQLAMLKSQIVAYNCLNSPNGQVPPAVQQAIFG. Positions 477-489 are enriched in polar residues; the sequence is SMPFQQNVPQMSS. The tract at residues 477 to 499 is disordered; sequence SMPFQQNVPQMSSVKKDTPTRDA. Basic and acidic residues predominate over residues 490-499; it reads VKKDTPTRDA. One can recognise an HSA domain in the interval 704–776; that stretch reads QKTEHAMRQK…ARQRLQALRA (73 aa). Polar residues predominate over residues 817–832; sequence SNIHSGNTSGKGSNSA. The tract at residues 817–836 is disordered; sequence SNIHSGNTSGKGSNSAELEA. One can recognise a Helicase ATP-binding domain in the interval 881–1046; that stretch reads LSLYNNNLNG…WALLNFVLPK (166 aa). ATP is bound at residue 894 to 901; that stretch reads DEMGLGKT. Positions 996-999 match the DEGH box motif; sequence DEGH. A Helicase C-terminal domain is found at 1191–1354; the sequence is LLDRILPKLF…STPEEREAFL (164 aa). Residues 1466-1511 form a disordered region; the sequence is TVDDPSSTLMPRKRGRPRKKTNSGSSLSTPLSQESSLARSGRKNTP. Residues 1476 to 1486 show a composition bias toward basic residues; it reads PRKRGRPRKKT. The segment covering 1488 to 1502 has biased composition (low complexity); sequence SGSSLSTPLSQESSL. The Bromo domain maps to 1513-1623; it reads YKQKALRRYC…KTLKEVIEDL (111 aa).

It belongs to the SNF2/RAD54 helicase family. In terms of assembly, component of the SWI/SNF global transcription activator complex composed of at least arp9, arp42, snf5, snf22, snf30, sbf59, sol1, ssr1, ssr2, ssr3, ssr4 and tfg3.

The protein localises to the nucleus. Its function is as follows. Helicase. Component of the SWI/SNF complex, an ATP-dependent chromatin remodeling complex, required for the positive and negative regulation of gene expression of a large number of genes. It changes chromatin structure by altering DNA-histone contacts within a nucleosome, leading eventually to a change in nucleosome position, thus facilitating or repressing binding of gene-specific transcription factors. In Schizosaccharomyces pombe (strain 972 / ATCC 24843) (Fission yeast), this protein is SWI/SNF chromatin-remodeling complex subunit snf22 (snf22).